A 317-amino-acid polypeptide reads, in one-letter code: Phosphopantothenate--cysteine ligase 1 (317 aa).

It belongs to the PPC synthetase family. Homodimer.

The catalysed reaction is (R)-4'-phosphopantothenate + L-cysteine + ATP = N-[(R)-4-phosphopantothenoyl]-L-cysteine + AMP + diphosphate + H(+). It functions in the pathway cofactor biosynthesis; coenzyme A biosynthesis; CoA from (R)-pantothenate: step 2/5. Functionally, catalyzes the first step in the biosynthesis of coenzyme A from vitamin B5/pantothenate, where cysteine is conjugated to 4'-phosphopantothenate to form 4-phosphopantothenoylcysteine. The catalytic activity is not CTP- but ATP-dependent. This Arabidopsis thaliana (Mouse-ear cress) protein is Phosphopantothenate--cysteine ligase 1 (PPCS1).